We begin with the raw amino-acid sequence, 511 residues long: Gap junction alpha-3 protein (511 aa).

The stretch at 2 to 15 is an intramembrane region; sequence GDWSFLGRLLENAQ. Topologically, residues 16–19 are cytoplasmic; that stretch reads EHST. A helical membrane pass occupies residues 20-40; it reads VIGKVWLTVLFIFRILVLGAA. Residues 41–71 lie on the Extracellular side of the membrane; sequence AEEVWGDEQSDFTCNTQQPGCENVCYDKAFP. Intrachain disulfides connect Cys54–Cys214, Cys61–Cys208, and Cys65–Cys203. Residues 72–92 traverse the membrane as a helical segment; that stretch reads ISHIRFWVLQIIFVSTPTLIY. At 93 to 174 the chain is on the cytoplasmic side; it reads LGHVLHIVRM…GALLRTYIFN (82 aa). Residues 110 to 119 are compositionally biased toward basic and acidic residues; the sequence is EEELKKRGSV. Residues 110 to 143 form a disordered region; the sequence is EEELKKRGSVKDNNYPGAATSGGGSGGGNNFKDP. The span at 129 to 138 shows a compositional bias: gly residues; sequence TSGGGSGGGN. The helical transmembrane segment at 175–195 threads the bilayer; it reads IIFKTLFEVGFIVGQYFLYGF. The Extracellular segment spans residues 196-223; that stretch reads ELKPVYQCSRPPCPHTVDCFISRPTEKT. A helical transmembrane segment spans residues 224-244; that stretch reads IFIIFMLVVASVSLLLNMLEI. The Cytoplasmic segment spans residues 245–511; that stretch reads YHLGWKKLKQ…SRARSDDLAV (267 aa). The tract at residues 397–511 is disordered; that stretch reads AEQQGKAPSS…SRARSDDLAV (115 aa). Low complexity-rich tracts occupy residues 403–415 and 440–456; these read APSS…TPSS and TTTN…ASGS.

This sequence belongs to the connexin family. In terms of assembly, a hemichannel or connexon is composed of a hexamer of connexins. A functional gap junction is formed by the apposition of two hemichannels. During early stages of lens development, interacts with the C-terminus of MIP. Detected in eye lens.

Its subcellular location is the cell membrane. It is found in the cell junction. It localises to the gap junction. Structural component of lens fiber gap junctions. Gap junctions are dodecameric channels that connect the cytoplasm of adjoining cells. They are formed by the docking of two hexameric hemichannels, one from each cell membrane. Small molecules and ions diffuse from one cell to a neighboring cell via the central pore. The sequence is that of Gap junction alpha-3 protein (GJA3) from Gallus gallus (Chicken).